Reading from the N-terminus, the 193-residue chain is ATP-dependent Clp protease proteolytic subunit (193 aa).

Ser-98 acts as the Nucleophile in catalysis. The active site involves His-123.

It belongs to the peptidase S14 family. In terms of assembly, fourteen ClpP subunits assemble into 2 heptameric rings which stack back to back to give a disk-like structure with a central cavity, resembling the structure of eukaryotic proteasomes.

Its subcellular location is the cytoplasm. It carries out the reaction Hydrolysis of proteins to small peptides in the presence of ATP and magnesium. alpha-casein is the usual test substrate. In the absence of ATP, only oligopeptides shorter than five residues are hydrolyzed (such as succinyl-Leu-Tyr-|-NHMec, and Leu-Tyr-Leu-|-Tyr-Trp, in which cleavage of the -Tyr-|-Leu- and -Tyr-|-Trp bonds also occurs).. Functionally, cleaves peptides in various proteins in a process that requires ATP hydrolysis. Has a chymotrypsin-like activity. Plays a major role in the degradation of misfolded proteins. ClpXP is involved in the complete degradation of the Site-2 clipped anti-sigma-W factor RsiW. This results in the release of SigW and the transcription activation of the genes under the control of the sigma-W factor. The sequence is that of ATP-dependent Clp protease proteolytic subunit from Oceanobacillus iheyensis (strain DSM 14371 / CIP 107618 / JCM 11309 / KCTC 3954 / HTE831).